Reading from the N-terminus, the 146-residue chain is Ecotin-like protein 1 (146 aa).

It belongs to the protease inhibitor I11 (ecotin) family.

This Leishmania major protein is Ecotin-like protein 1 (ISP1).